The following is a 101-amino-acid chain: NAD(P)H-quinone oxidoreductase subunit 4L, chloroplastic (101 aa).

The next 3 membrane-spanning stretches (helical) occupy residues 2–22, 32–52, and 61–81; these read MLEH…YGLI, MCLE…SDLF, and IFSI…LAII.

It belongs to the complex I subunit 4L family. In terms of assembly, NDH is composed of at least 16 different subunits, 5 of which are encoded in the nucleus.

Its subcellular location is the plastid. It is found in the chloroplast thylakoid membrane. The enzyme catalyses a plastoquinone + NADH + (n+1) H(+)(in) = a plastoquinol + NAD(+) + n H(+)(out). It carries out the reaction a plastoquinone + NADPH + (n+1) H(+)(in) = a plastoquinol + NADP(+) + n H(+)(out). Functionally, NDH shuttles electrons from NAD(P)H:plastoquinone, via FMN and iron-sulfur (Fe-S) centers, to quinones in the photosynthetic chain and possibly in a chloroplast respiratory chain. The immediate electron acceptor for the enzyme in this species is believed to be plastoquinone. Couples the redox reaction to proton translocation, and thus conserves the redox energy in a proton gradient. The sequence is that of NAD(P)H-quinone oxidoreductase subunit 4L, chloroplastic from Ranunculus macranthus (Large buttercup).